Here is a 321-residue protein sequence, read N- to C-terminus: Cathepsin O (321 aa).

The first 23 residues, 1-23 (MDVRALPWLPWLLWLLCRGGGDA), serve as a signal peptide directing secretion. The propeptide at 24 to 107 (DSRAPFTPTW…EVHMSIPNVS (84 aa)) is activation peptide. Residues Asn-62 and Asn-105 are each glycosylated (N-linked (GlcNAc...) asparagine). Disulfide bonds link Cys-129/Cys-170, Cys-163/Cys-204, and Cys-262/Cys-310. Residue Cys-132 is part of the active site. Catalysis depends on residues His-269 and Asn-289.

It belongs to the peptidase C1 family. In terms of tissue distribution, expressed in all tissues examined. High levels seen in the ovary, kidney and placenta while low levels seen in thymus and skeletal muscle.

The protein localises to the lysosome. The enzyme catalyses The recombinant human enzyme hydrolyzes synthetic endopeptidase substrates including Z-Phe-Arg-NHMec and Z-Arg-Arg-NHMec.. Its function is as follows. Proteolytic enzyme possibly involved in normal cellular protein degradation and turnover. The polypeptide is Cathepsin O (CTSO) (Homo sapiens (Human)).